Consider the following 309-residue polypeptide: MSDVLSKKQQFSLKKLNKSLRKSTGQAIADYNMIEEGDRVMVCLSGGKDSFTMLDILLELRAAAPIHFEIIAVNLDQKQPDFPEHILPEYLQKLGVDYKIVEEDTYSIVQDKIPEGKTTCSLCSRLRRGILYRTAKELGATKIALGHHRDDLLATLMLNMFFGGKLKSMPAKLVSDNGEHVVIRPLAYCKEKEIEAYAKLKEYPIIPCNLCGSQPNLQRQVTKNMLNEWDVKFPGRLETMFTAMQNVVPSHLSDTALFNFKEIDKSSGVIDGGDLAFDKEPIKHHTEDITPIETQYYQQHQAVKIKQLT.

A PP-loop motif motif is present at residues 45–50 (SGGKDS). 3 residues coordinate [4Fe-4S] cluster: C120, C123, and C211.

The protein belongs to the TtcA family. In terms of assembly, homodimer. Mg(2+) is required as a cofactor. [4Fe-4S] cluster serves as cofactor.

Its subcellular location is the cytoplasm. The catalysed reaction is cytidine(32) in tRNA + S-sulfanyl-L-cysteinyl-[cysteine desulfurase] + AH2 + ATP = 2-thiocytidine(32) in tRNA + L-cysteinyl-[cysteine desulfurase] + A + AMP + diphosphate + H(+). It functions in the pathway tRNA modification. Functionally, catalyzes the ATP-dependent 2-thiolation of cytidine in position 32 of tRNA, to form 2-thiocytidine (s(2)C32). The sulfur atoms are provided by the cysteine/cysteine desulfurase (IscS) system. This chain is tRNA-cytidine(32) 2-sulfurtransferase, found in Psychromonas ingrahamii (strain DSM 17664 / CCUG 51855 / 37).